Consider the following 155-residue polypeptide: Small ribosomal subunit protein uS7cz/uS7cy (155 aa).

Belongs to the universal ribosomal protein uS7 family. In terms of assembly, part of the 30S ribosomal subunit.

The protein localises to the plastid. The protein resides in the chloroplast. Its function is as follows. One of the primary rRNA binding proteins, it binds directly to 16S rRNA where it nucleates assembly of the head domain of the 30S subunit. This is Small ribosomal subunit protein uS7cz/uS7cy (rps7-A) from Phalaenopsis aphrodite subsp. formosana (Moth orchid).